Reading from the N-terminus, the 233-residue chain is MAKLTKRMRVIREKVDGTKLYEINDAVALLKELATAKFVESVDVAVNLGIDPRKSDQNVRGATVLPHGTGRDVRVAVFTQGANAEAAKAAGAELVGMDDLAEQIKAGEMNFDVVIASPDAMRVVGMLGQILGPRGLMPNPKTGTVTPNVAEAVKNAKAGQVRYRNDKNGIIHTTIGKVDFTPVQLKENLEALISALKKAKPAVAKGVYVKKVSISTTMGAGVAVDQATLDTAN.

This sequence belongs to the universal ribosomal protein uL1 family. In terms of assembly, part of the 50S ribosomal subunit.

Its function is as follows. Binds directly to 23S rRNA. The L1 stalk is quite mobile in the ribosome, and is involved in E site tRNA release. Functionally, protein L1 is also a translational repressor protein, it controls the translation of the L11 operon by binding to its mRNA. The chain is Large ribosomal subunit protein uL1 from Shewanella putrefaciens (strain CN-32 / ATCC BAA-453).